Reading from the N-terminus, the 115-residue chain is MRVPSQWMISSRVTVAWNIVGYLVYAALAFVGGFAVWFSLFFAMATDGCHDSACDASYHVFPAMVTMWIGVGAVLLLTLVVMVRNSSRGNVVIGWPFVGLLALGLVYVAADAVLH.

The next 3 helical transmembrane spans lie at 23–43, 63–83, and 90–110; these read LVYA…LFFA, AMVT…VVMV, and NVVI…YVAA.

Its subcellular location is the cell membrane. This is an uncharacterized protein from Mycobacterium bovis (strain ATCC BAA-935 / AF2122/97).